Here is a 142-residue protein sequence, read N- to C-terminus: Biogenesis of lysosome-related organelles complex 1 subunit 2 (142 aa).

The segment at 1-33 (MAAAAEGVLATRSDEPARDDAAVETAEEAKEPA) is disordered. Ala-2 bears the N-acetylalanine mark. Residues 12–33 (RSDEPARDDAAVETAEEAKEPA) are compositionally biased toward basic and acidic residues. Residues 79–127 (EMKDIAINISRNLKDLNQKYAGLQPYLDQINVIEEQVAALEQAAYKLDA) adopt a coiled-coil conformation.

The protein belongs to the BLOC1S2 family. Component of the biogenesis of lysosome-related organelles complex 1 (BLOC-1) composed of BLOC1S1, BLOC1S2, BLOC1S3, BLOC1S4, BLOC1S5, BLOC1S6, DTNBP1/BLOC1S7 and SNAPIN/BLOC1S8. Octamer composed of one copy each BLOC1S1, BLOC1S2, BLOC1S3, BLOC1S4, BLOC1S5, BLOC1S6, DTNBP1/BLOC1S7 and SNAPIN/BLOC1S8. Interacts directly with BLOC1S1, BLOC1S3, BLOC1S4, BLOC1S5 and SNAPIN. The BLOC-1 complex associates with the AP-3 protein complex and membrane protein cargos. Component of the BLOC-one-related complex (BORC) which is composed of BLOC1S1, BLOC1S2, BORCS5, BORCS6, BORCS7, BORCS8, KXD1 and SNAPIN. Interacts with gamma-tubulin. Interacts with IFT57. In terms of tissue distribution, isoform 1 and isoform 2 are widely expressed. Expressed in various malignant tumor tissues (at protein level).

The protein resides in the cytoplasm. The protein localises to the cytoskeleton. It localises to the microtubule organizing center. It is found in the centrosome. Its subcellular location is the lysosome membrane. Functionally, component of the BLOC-1 complex, a complex that is required for normal biogenesis of lysosome-related organelles (LRO), such as platelet dense granules and melanosomes. In concert with the AP-3 complex, the BLOC-1 complex is required to target membrane protein cargos into vesicles assembled at cell bodies for delivery into neurites and nerve terminals. The BLOC-1 complex, in association with SNARE proteins, is also proposed to be involved in neurite extension. As part of the BORC complex may play a role in lysosomes movement and localization at the cell periphery. Associated with the cytosolic face of lysosomes, the BORC complex may recruit ARL8B and couple lysosomes to microtubule plus-end-directed kinesin motor. May play a role in cell proliferation. This Homo sapiens (Human) protein is Biogenesis of lysosome-related organelles complex 1 subunit 2 (BLOC1S2).